Here is a 583-residue protein sequence, read N- to C-terminus: Lipoprotein LpqB (583 aa).

A signal peptide spans 1–29 (MSNKTTEATKTTKVKKVLSVVAGLGLLAG). Cysteine 30 is lipidated: N-palmitoyl cysteine. The S-diacylglycerol cysteine moiety is linked to residue cysteine 30. The interval 38–63 (NPEAISSYAPAPSGQEAPTPTDGQPS) is disordered.

The protein belongs to the LpqB lipoprotein family.

It is found in the cell membrane. In Corynebacterium jeikeium (strain K411), this protein is Lipoprotein LpqB.